Consider the following 772-residue polypeptide: Gelsolin (772 aa).

Residues 1 to 17 (LGALVVALCALSPPARA) form the signal peptide. The propeptide occupies 18–33 (ATASRGAPQARAPQGR). A disordered region spans residues 19 to 38 (TASRGAPQARAPQGRVSPMR). Residues 41–166 (TMVVEHPEFL…YKKGGVASGF (126 aa)) are actin-severing. Residues 66 to 148 (FDLVPVPPNL…VQGFESATFL (83 aa)) form a Gelsolin-like 1 repeat. Tyr76 bears the Phosphotyrosine mark. Residues Gly82, Asp83, Glu114, Asp126, Gly131, and Ala133 each contribute to the Ca(2+) site. Residues 113-116 (DESG) form an actin-actin interfilament contact point region. 152-159 (KSGLKYKK) lines the a 1,2-diacyl-sn-glycero-3-phospho-(1D-myo-inositol-4,5-bisphosphate) pocket. Val162 contacts Ca(2+). 178–186 (RLFQVKGRR) contacts a 1,2-diacyl-sn-glycero-3-phospho-(1D-myo-inositol-4,5-bisphosphate). The stretch at 188–260 (VRATEVPVSW…SEEDAEPAGM (73 aa)) is one Gelsolin-like 2 repeat. Residues Gly203 and Asp204 each contribute to the Ca(2+) site. The cysteines at positions 205 and 218 are disulfide-linked. Glu226, Asp276, Glu319, Asp320, and Glu344 together coordinate Ca(2+). The Gelsolin-like 3 repeat unit spans residues 307 to 379 (DENPFAQGAL…LPEGGETPLF (73 aa)). Tyr399 and Tyr455 each carry phosphotyrosine. An actin-binding, Ca-sensitive region spans residues 424–772 (AAQHGMDDDG…LDRAIAELAA (349 aa)). One copy of the Gelsolin-like 4 repeat lies at 445 to 526 (SNKVPVDPAT…VQGKEPAHLM (82 aa)). Ca(2+) contacts are provided by Gly461, Asp462, Glu492, Asp504, Gly509, Pro511, and Thr541. A Gelsolin-like 5 repeat occupies 567–632 (RAVEVIPKAG…AEGSEPDSFW (66 aa)). Lys574 is subject to N6-acetyllysine. Positions 581 and 582 each coordinate Ca(2+). Tyr593 is modified (phosphotyrosine). A Ca(2+)-binding site is contributed by Glu604. Phosphotyrosine is present on Tyr641. Residues 671-746 (VEEVPGELMQ…VKQGFEPPSF (76 aa)) form a Gelsolin-like 6 repeat. Positions 686, 687, and 709 each coordinate Ca(2+). Thr732 carries the phosphothreonine modification.

This sequence belongs to the villin/gelsolin family. As to quaternary structure, binds to actin and to fibronectin. Identified in a complex composed of ACTA1, COBL, GSN and TMSB4X. Interacts with the inactive form of EIF2AK2/PKR. Interacts with FLII. Phosphorylated on tyrosine residues in vitro.

The protein resides in the cytoplasm. It localises to the cytoskeleton. Its subcellular location is the secreted. Its function is as follows. Calcium-regulated, actin-modulating protein that binds to the plus (or barbed) ends of actin monomers or filaments, preventing monomer exchange (end-blocking or capping). It can promote the assembly of monomers into filaments (nucleation) as well as sever filaments already formed. Plays a role in ciliogenesis. The protein is Gelsolin (GSN) of Sus scrofa (Pig).